A 426-amino-acid chain; its full sequence is Anaerobic glycerol-3-phosphate dehydrogenase subunit B (426 aa).

Belongs to the anaerobic G-3-P dehydrogenase subunit B family. Composed of a catalytic GlpA/B dimer and of membrane bound GlpC. The cofactor is FMN.

The catalysed reaction is a quinone + sn-glycerol 3-phosphate = dihydroxyacetone phosphate + a quinol. Its pathway is polyol metabolism; glycerol degradation via glycerol kinase pathway; glycerone phosphate from sn-glycerol 3-phosphate (anaerobic route): step 1/1. In terms of biological role, conversion of glycerol 3-phosphate to dihydroxyacetone. Uses fumarate or nitrate as electron acceptor. This chain is Anaerobic glycerol-3-phosphate dehydrogenase subunit B, found in Haemophilus ducreyi (strain 35000HP / ATCC 700724).